The sequence spans 198 residues: Glycerol-3-phosphate acyltransferase (198 aa).

Helical transmembrane passes span 6–26, 55–75, 83–103, 113–133, and 154–174; these read FLPVALIIGYLFGSIPFGLIL, GLAAGTLLGDALKGTAAVIIS, AAMIAGLGAFLGHLFPVWLKF, IGILIGLFWPGAIFFCLVWLA, and IVLWAFGHTALAALFALLTLL.

Belongs to the PlsY family. Probably interacts with PlsX.

It localises to the cell inner membrane. The enzyme catalyses an acyl phosphate + sn-glycerol 3-phosphate = a 1-acyl-sn-glycero-3-phosphate + phosphate. Its pathway is lipid metabolism; phospholipid metabolism. Its function is as follows. Catalyzes the transfer of an acyl group from acyl-phosphate (acyl-PO(4)) to glycerol-3-phosphate (G3P) to form lysophosphatidic acid (LPA). This enzyme utilizes acyl-phosphate as fatty acyl donor, but not acyl-CoA or acyl-ACP. In Bradyrhizobium sp. (strain BTAi1 / ATCC BAA-1182), this protein is Glycerol-3-phosphate acyltransferase.